The sequence spans 485 residues: NADH-quinone oxidoreductase subunit N (485 aa).

14 consecutive transmembrane segments (helical) span residues leucine 3–phenylalanine 23, histidine 30–tryptophan 50, tyrosine 67–valine 87, phenylalanine 96–serine 116, leucine 120–phenylalanine 140, leucine 154–phenylalanine 174, phenylalanine 202–phenylalanine 222, alanine 247–leucine 267, tryptophan 271–isoleucine 291, methionine 299–glycine 319, leucine 332–isoleucine 352, alanine 375–leucine 395, tryptophan 411–isoleucine 431, and leucine 453–leucine 473.

This sequence belongs to the complex I subunit 2 family. In terms of assembly, NDH-1 is composed of 14 different subunits. Subunits NuoA, H, J, K, L, M, N constitute the membrane sector of the complex.

It localises to the cell membrane. It carries out the reaction a quinone + NADH + 5 H(+)(in) = a quinol + NAD(+) + 4 H(+)(out). In terms of biological role, NDH-1 shuttles electrons from NADH, via FMN and iron-sulfur (Fe-S) centers, to quinones in the respiratory chain. The immediate electron acceptor for the enzyme in this species is believed to be ubiquinone. Couples the redox reaction to proton translocation (for every two electrons transferred, four hydrogen ions are translocated across the cytoplasmic membrane), and thus conserves the redox energy in a proton gradient. The polypeptide is NADH-quinone oxidoreductase subunit N (Dehalococcoides mccartyi (strain ATCC BAA-2100 / JCM 16839 / KCTC 5957 / BAV1)).